A 686-amino-acid chain; its full sequence is Chondroitin synthase (686 aa).

The interval 130–417 (YVWAGKRKEL…LLQQKVPYFY (288 aa)) is galactosaminyltransferase; A1 domain. UDP-N-acetyl-alpha-D-galactosamine contacts are provided by residues Pro157, Arg161, Asp188, Tyr217, Arg223, and 239–240 (DC). Asp241 provides a ligand contact to Mn(2+). Residue 361–362 (ED) participates in UDP-N-acetyl-alpha-D-galactosamine binding. His386 serves as a coordination point for Mn(2+). The interval 418–682 (RKKEKIESAT…ECRKYTWEKI (265 aa)) is glucuronosyltransferase; A2 domain. Residues Tyr441, Asp469, and 517-520 (QLDS) each bind UDP-alpha-D-glucuronate. Position 521 (Asp521) interacts with Mn(2+). UDP-alpha-D-glucuronate-binding positions include His581 and 603 to 604 (AV). Mn(2+) is bound at residue His631.

It belongs to the glycosyltransferase 2 family. CS/HAS subfamily. Mn(2+) is required as a cofactor.

The enzyme catalyses 3-O-(beta-D-GlcA-(1-&gt;3)-beta-D-GalNAc-(1-&gt;4)-beta-D-GlcA-(1-&gt;3)-beta-D-Gal-(1-&gt;3)-beta-D-Gal-(1-&gt;4)-beta-D-Xyl)-L-seryl-[protein] + UDP-N-acetyl-alpha-D-galactosamine = 3-O-(beta-D-GalNAc-(1-&gt;4)-beta-D-GlcA-(1-&gt;3)-beta-D-GalNAc-(1-&gt;4)-beta-D-GlcA-(1-&gt;3)-beta-D-Gal-(1-&gt;3)-beta-D-Gal-(1-&gt;4)-beta-D-Xyl)-L-seryl-[protein] + UDP + H(+). It carries out the reaction 3-O-{beta-D-GlcA-(1-&gt;3)-[beta-D-GalNAc-(1-&gt;4)-beta-D-GlcA-(1-&gt;3)](n)-beta-D-GalNAc-(1-&gt;4)-beta-D-GlcA-(1-&gt;3)-beta-D-Gal-(1-&gt;3)-beta-D-Gal-(1-&gt;4)-beta-D-Xyl}-L-seryl-[protein] + UDP-N-acetyl-alpha-D-galactosamine = 3-O-{[beta-D-GalNAc-(1-&gt;4)-beta-D-GlcA-(1-&gt;3)](n+1)-beta-D-GalNAc-(1-&gt;4)-beta-D-GlcA-(1-&gt;3)-beta-D-Gal-(1-&gt;3)-beta-D-Gal-(1-&gt;4)-beta-D-Xyl}-L-seryl-[protein] + UDP + H(+). The catalysed reaction is 3-O-(beta-D-GalNAc-(1-&gt;4)-beta-D-GlcA-(1-&gt;3)-beta-D-Gal-(1-&gt;3)-beta-D-Gal-(1-&gt;4)-beta-D-Xyl)-L-seryl-[protein] + UDP-alpha-D-glucuronate = 3-O-(beta-D-GlcA-(1-&gt;3)-beta-D-GalNAc-(1-&gt;4)-beta-D-GlcA-(1-&gt;3)-beta-D-Gal-(1-&gt;3)-beta-D-Gal-(1-&gt;4)-beta-D-Xyl)-L-seryl-[protein] + UDP + H(+). It catalyses the reaction 3-O-{[beta-D-GalNAc-(1-&gt;4)-beta-D-GlcA-(1-&gt;3)](n)-beta-D-GalNAc-(1-&gt;4)-beta-D-GlcA-(1-&gt;3)-beta-D-Gal-(1-&gt;3)-beta-D-Gal-(1-&gt;4)-beta-D-Xyl}-L-seryl-[protein] + UDP-alpha-D-glucuronate = 3-O-{beta-D-GlcA-(1-&gt;3)-[beta-D-GalNAc-(1-&gt;4)-beta-D-GlcA-(1-&gt;3)](n)-beta-D-GalNAc-(1-&gt;4)-beta-D-GlcA-(1-&gt;3)-beta-D-Gal-(1-&gt;3)-beta-D-Gal-(1-&gt;4)-beta-D-Xyl}-L-seryl-[protein] + UDP + H(+). Glycosyltransferase that catalyzes elongation of chondroitin, a polysaccharide composed of a repeating disaccharide of N-acetylgalactosamine (GalNAc) and glucuronic acid (GlcUA) units, by alternatively transferring the GlcUA and GalNAc moiety from UDP-GlcUA and UDP-GalNAc to the non-reducing ends of the chondroitin chain. Each chondroitin unit has the composition beta-(1-&gt;4)-GlcUA-beta-(1-&gt;3)-GalNAc. This chain is Chondroitin synthase (kfoC), found in Escherichia coli.